The primary structure comprises 553 residues: Hydroxylamine reductase (553 aa).

[4Fe-4S] cluster-binding residues include C3, C6, C15, and C21. The hybrid [4Fe-2O-2S] cluster site is built by H244, E268, C312, C406, C434, C459, E494, and K496. The residue at position 406 (C406) is a Cysteine persulfide.

The protein belongs to the HCP family. As to quaternary structure, monomer. Requires [4Fe-4S] cluster as cofactor. It depends on hybrid [4Fe-2O-2S] cluster as a cofactor.

The protein localises to the cytoplasm. The enzyme catalyses A + NH4(+) + H2O = hydroxylamine + AH2 + H(+). Functionally, catalyzes the reduction of hydroxylamine to form NH(3) and H(2)O. The protein is Hydroxylamine reductase of Nitratidesulfovibrio vulgaris (strain ATCC 29579 / DSM 644 / CCUG 34227 / NCIMB 8303 / VKM B-1760 / Hildenborough) (Desulfovibrio vulgaris).